The following is a 465-amino-acid chain: NADH-quinone oxidoreductase subunit N (465 aa).

13 helical membrane-spanning segments follow: residues 6 to 26 (ILPETFSIISSLVLLLLGIVF), 30 to 50 (TINLLALGCTVITLIILILSA), 66 to 86 (LYIRSAQGLILIAGILVLLLL), 98 to 118 (SILILFTLFGMITLVSANNLI), 156 to 176 (ALSSCIMLYGMSLLYGYTGLV), 194 to 214 (IVFGLVLILIGLCFKLAIAPF), 226 to 246 (PTIVTAFFSTVPKAALVTFLI), 261 to 281 (FQPVLLYISALSVLISAFGAL), 289 to 309 (LLAYSSIGHIGFILASLSIFT), 317 to 337 (LIYLVIYIITNIGLFSYFIQI), 363 to 383 (ILLFSMAGIPPLAGFFAKLFI), 391 to 411 (GFIGMSLIFIVASVISCYYYL), and 432 to 452 (SLFIVTSVASLINIVLFMCVE).

This sequence belongs to the complex I subunit 2 family. In terms of assembly, NDH-1 is composed of 14 different subunits. Subunits NuoA, H, J, K, L, M, N constitute the membrane sector of the complex.

The protein resides in the cell membrane. The catalysed reaction is a quinone + NADH + 5 H(+)(in) = a quinol + NAD(+) + 4 H(+)(out). Functionally, NDH-1 shuttles electrons from NADH, via FMN and iron-sulfur (Fe-S) centers, to quinones in the respiratory chain. The immediate electron acceptor for the enzyme in this species is believed to be ubiquinone. Couples the redox reaction to proton translocation (for every two electrons transferred, four hydrogen ions are translocated across the cytoplasmic membrane), and thus conserves the redox energy in a proton gradient. This is NADH-quinone oxidoreductase subunit N from Wolbachia sp. subsp. Brugia malayi (strain TRS).